A 571-amino-acid chain; its full sequence is Double-stranded RNA-binding protein Staufen homolog 2 (571 aa).

One can recognise a DRBM 1 domain in the interval 8-75 (TPMCLVNELA…ANKALTESTL (68 aa)). A phosphoserine mark is found at Pro-9 and Val-13. The residue at position 18 (Arg-18) is a Phosphothreonine. At Ser-21 the chain carries Phosphoserine. Disordered stretches follow at residues 71-94 (TEST…PGSI) and 178-203 (ALQN…DDKD). Residues 83–94 (PKSNVNNNPGSI) show a composition bias toward polar residues. Positions 95-181 (TPTVELNGLA…AMKALQALQN (87 aa)) constitute a DRBM 2 domain. Ser-188 carries the phosphoserine modification. Basic and acidic residues predominate over residues 194 to 203 (SGKEMDDDKD). DRBM domains are found at residues 207 to 274 (SEIS…ELKK) and 307 to 375 (NPIS…QLGY). Short sequence motifs (nuclear localization signal) lie at residues 273–317 (KKLP…QIQQ) and 373–412 (LGYK…PKGI). A required for dendritic transport region spans residues 381–571 (LQDQLDKTGE…QDCKKSKSVI (191 aa)). The segment at 382–413 (QDQLDKTGENKGWSGPKPGFPEPANNTPKGIL) is disordered. Ser-395, Ser-416, Ser-426, Ser-440, Ser-456, and Ser-493 each carry phosphoserine. A disordered region spans residues 546–571 (LREKADNNQANPGSITQDCKKSKSVI). A compositionally biased stretch (polar residues) spans 552-562 (NNQANPGSITQ).

As to quaternary structure, identified in a mRNP complex, at least composed of DHX9, DDX3X, ELAVL1, HNRNPU, IGF2BP1, ILF3, PABPC1, PCBP2, PTBP2, STAU1, STAU2, SYNCRIP and YBX1. Interacts with the exportin XPO5. This requires RNA and RAN bound to GTP. Interacts with microtubules. Isoform 2 and isoform 3 may also interact with ribosomes, and this association is independent of translation. Interacts with TRIM71 (via NHL repeats) in an RNA-dependent manner. Expressed in both somata and dendrites of hippocampal neurons.

Its subcellular location is the nucleus. The protein resides in the nucleolus. It is found in the cytoplasm. The protein localises to the endoplasmic reticulum. Functionally, RNA-binding protein required for the microtubule-dependent transport of neuronal RNA from the cell body to the dendrite. As protein synthesis occurs within the dendrite, the localization of specific mRNAs to dendrites may be a prerequisite for neurite outgrowth and plasticity at sites distant from the cell body. This Rattus norvegicus (Rat) protein is Double-stranded RNA-binding protein Staufen homolog 2 (Stau2).